The primary structure comprises 256 residues: Trypsin alpha (256 aa).

The signal sequence occupies residues Met1–Gly22. Positions Leu23–Arg30 are cleaved as a propeptide — activation peptide. The 224-residue stretch at Ile31–Asn254 folds into the Peptidase S1 domain. Cys56 and Cys72 are oxidised to a cystine. Active-site charge relay system residues include His71 and Asp116. 2 disulfides stabilise this stretch: Cys180-Cys197 and Cys206-Cys230. Residue Ser210 is the Charge relay system of the active site.

The protein belongs to the peptidase S1 family. In terms of tissue distribution, synthesized in the midgut of both larvae and adults, primarily in the ventriculus and gastric caeca.

The protein localises to the secreted. It is found in the extracellular space. It carries out the reaction Preferential cleavage: Arg-|-Xaa, Lys-|-Xaa.. This chain is Trypsin alpha (alphaTry), found in Drosophila melanogaster (Fruit fly).